The primary structure comprises 250 residues: 7-cyano-7-deazaguanine synthase (250 aa).

Position 21-31 (21-31 (FSGGQDSSVCL)) interacts with ATP. 4 residues coordinate Zn(2+): C209, C224, C227, and C230.

The protein belongs to the QueC family. Requires Zn(2+) as cofactor.

The enzyme catalyses 7-carboxy-7-deazaguanine + NH4(+) + ATP = 7-cyano-7-deazaguanine + ADP + phosphate + H2O + H(+). It functions in the pathway purine metabolism; 7-cyano-7-deazaguanine biosynthesis. In terms of biological role, catalyzes the ATP-dependent conversion of 7-carboxy-7-deazaguanine (CDG) to 7-cyano-7-deazaguanine (preQ(0)). The protein is 7-cyano-7-deazaguanine synthase of Caulobacter sp. (strain K31).